The chain runs to 206 residues: Pyridoxine/pyridoxamine 5'-phosphate oxidase (206 aa).

FMN contacts are provided by residues 53–58, 68–69, K75, and Q97; these read RMVLLK and YT. Substrate is bound at residue K58. Substrate contacts are provided by Y115, R119, and S123. Residues 132–133 and W177 each bind FMN; that span reads QS. A substrate-binding site is contributed by 183 to 185; sequence RLH. R187 is an FMN binding site.

This sequence belongs to the pyridoxamine 5'-phosphate oxidase family. In terms of assembly, homodimer. FMN serves as cofactor.

The enzyme catalyses pyridoxamine 5'-phosphate + O2 + H2O = pyridoxal 5'-phosphate + H2O2 + NH4(+). It catalyses the reaction pyridoxine 5'-phosphate + O2 = pyridoxal 5'-phosphate + H2O2. The protein operates within cofactor metabolism; pyridoxal 5'-phosphate salvage; pyridoxal 5'-phosphate from pyridoxamine 5'-phosphate: step 1/1. It participates in cofactor metabolism; pyridoxal 5'-phosphate salvage; pyridoxal 5'-phosphate from pyridoxine 5'-phosphate: step 1/1. Functionally, catalyzes the oxidation of either pyridoxine 5'-phosphate (PNP) or pyridoxamine 5'-phosphate (PMP) into pyridoxal 5'-phosphate (PLP). In Rhizobium meliloti (strain 1021) (Ensifer meliloti), this protein is Pyridoxine/pyridoxamine 5'-phosphate oxidase.